The chain runs to 906 residues: Coatomer subunit beta' (906 aa).

WD repeat units follow at residues 13-52 (ARSD…LVKT), 55-94 (VCDL…RVHM), 97-136 (AHSD…SCSQ), 140-180 (GHTH…PNFT), 183-224 (GHEK…CVQT), 227-266 (GHAQ…LEST), 350-388 (SCEI…NKSF), and 390-425 (SAQE…KSFK). Lysine 627 is subject to N6-acetyllysine. Residues 746 to 783 (IRTGRLPEAAFLARTYLPSQVSRVVKLWRENLSKVNQK) form a WD 9 repeat. The disordered stretch occupies residues 837 to 862 (EEAKGFQPSRSTAQQELDGKPASPTP). Serine 859 carries the post-translational modification Phosphoserine. At threonine 861 the chain carries Phosphothreonine. Residues 866-890 (ASHTANKEEKSLLELEVDLDNLELE) are a coiled coil.

Belongs to the WD repeat COPB2 family. Oligomeric complex that consists of at least the alpha, beta, beta', gamma, delta, epsilon and zeta subunits. Probably interacts with PEX11A. Interacts with SCYL1. Interacts with JAGN1.

The protein localises to the cytoplasm. It localises to the cytosol. It is found in the golgi apparatus membrane. Its subcellular location is the cytoplasmic vesicle. The protein resides in the COPI-coated vesicle membrane. The coatomer is a cytosolic protein complex that binds to dilysine motifs and reversibly associates with Golgi non-clathrin-coated vesicles, which further mediate biosynthetic protein transport from the ER, via the Golgi up to the trans Golgi network. Coatomer complex is required for budding from Golgi membranes, and is essential for the retrograde Golgi-to-ER transport of dilysine-tagged proteins. In mammals, the coatomer can only be recruited by membranes associated to ADP-ribosylation factors (ARFs), which are small GTP-binding proteins; the complex also influences the Golgi structural integrity, as well as the processing, activity, and endocytic recycling of LDL receptors. Its function is as follows. This coatomer complex protein, essential for Golgi budding and vesicular trafficking, is a selective binding protein (RACK) for protein kinase C, epsilon type. It binds to Golgi membranes in a GTP-dependent manner. In Macaca fascicularis (Crab-eating macaque), this protein is Coatomer subunit beta' (COPB2).